A 374-amino-acid chain; its full sequence is Ribosomal RNA large subunit methyltransferase G (374 aa).

The protein belongs to the methyltransferase superfamily. RlmG family.

It is found in the cytoplasm. It carries out the reaction guanosine(1835) in 23S rRNA + S-adenosyl-L-methionine = N(2)-methylguanosine(1835) in 23S rRNA + S-adenosyl-L-homocysteine + H(+). Specifically methylates the guanine in position 1835 (m2G1835) of 23S rRNA. The chain is Ribosomal RNA large subunit methyltransferase G from Pseudomonas putida (strain GB-1).